The following is a 103-amino-acid chain: Large ribosomal subunit protein bL21 (103 aa).

This sequence belongs to the bacterial ribosomal protein bL21 family. Part of the 50S ribosomal subunit. Contacts protein L20.

Functionally, this protein binds to 23S rRNA in the presence of protein L20. The protein is Large ribosomal subunit protein bL21 of Shewanella sp. (strain MR-7).